The sequence spans 381 residues: Meiotic recombination protein SPO11-1 (381 aa).

Residues 23–162 (EEAATLLHRI…LNVVPVAKGL (140 aa)) form the Topo IIA-type catalytic domain. The active-site O-(5'-phospho-DNA)-tyrosine intermediate is Tyr-123. Glu-209 and Asp-261 together coordinate Mg(2+).

The protein belongs to the TOP6A family. It depends on Mg(2+) as a cofactor. As to expression, highly expressed in flowers before pollination. Expressed in roots and shoots.

It localises to the nucleus. The enzyme catalyses ATP-dependent breakage, passage and rejoining of double-stranded DNA.. Its function is as follows. Required for meiotic recombination. Mediates DNA cleavage that forms the double-strand breaks (DSB) that initiate meiotic recombination. May be involved in plant growth and development, and stress tolerance. The chain is Meiotic recombination protein SPO11-1 (SPO11-1) from Oryza sativa subsp. indica (Rice).